The primary structure comprises 94 residues: Small ribosomal subunit protein bS6 (94 aa).

Belongs to the bacterial ribosomal protein bS6 family.

In terms of biological role, binds together with bS18 to 16S ribosomal RNA. The chain is Small ribosomal subunit protein bS6 from Alkaliphilus oremlandii (strain OhILAs) (Clostridium oremlandii (strain OhILAs)).